The following is a 442-amino-acid chain: MINAPVFRRVLALLGDLRLAILLLLVIAIASMAGTVIEQGQSLSFYQANYPENPALFGFLSWRVLLALGLDHVYRTPWYLTLLVLFGASLTACTLTRQVPALTTAQRWHYYQEPRQFTKLALSTTIPQGSLTALATALRAKGYRVWQTDTQLYARKGLVGRLGPIVVHASMLLILLGGILGALTGFMAQELIPSGETVHLQHIVEAGPLARIPQDWSVKVNRFWIDYTDAGEIDQFYSDLSIQDAKGQEVKRGTIHVNRPLRYGGVSLYQADWGIAAIRFRLNRSPVLQLPMAPLDTGGKGRLWGTWLPTRPDLSAGVSLIARDLQGTVLLYGPKGEFLTSLRTGMSTEVNGVTLTLVELVGSTGLQIKADPGIPLFYAGFALLMAGVIMSYVSHSQVWGLQENQRLYLGGRTNRAQLAFEQELVAIARELAPPSQTTAVDL.

A run of 3 helical transmembrane segments spans residues 17–37 (LRLAILLLLVIAIASMAGTVI), 76–96 (TPWYLTLLVLFGASLTACTLT), and 162–182 (LGPIVVHASMLLILLGGILGA).

Belongs to the Ccs1/CcsB family. In terms of assembly, may interact with CcsA.

It is found in the cellular thylakoid membrane. Required during biogenesis of c-type cytochromes (cytochrome c6 and cytochrome f) at the step of heme attachment. In Thermosynechococcus vestitus (strain NIES-2133 / IAM M-273 / BP-1), this protein is Cytochrome c biogenesis protein CcsB.